The primary structure comprises 359 residues: Mitochondrial glutathione transporter SLC25A39 (359 aa).

Topologically, residues 1–14 (MDDQDPGGISPLQQ) are mitochondrial intermembrane. 3 Solcar repeats span residues 9–151 (ISPL…LKAF), 159–243 (SDLY…VKSQ), and 253–347 (TSVG…GKSF). Residues 15–35 (MVASGAGAVVTSLFMTPLDVV) traverse the membrane as a helical segment. At 36–121 (KVRLQSQRPT…VKIVRHEGTR (86 aa)) the chain is on the mitochondrial matrix side. Residues Cys-74, Cys-78, Cys-88, and Cys-94 each contribute to the [2Fe-2S] cluster site. Residues 122-142 (TLWSGLPATLVMTVPATAIYF) form a helical membrane-spanning segment. Topologically, residues 143 to 164 (TAYDQLKAFLCGQSLTSDLYAP) are mitochondrial intermembrane. Residues 165-185 (MVAGALARMGTVTVVSPLELV) form a helical membrane-spanning segment. Residues 186 to 214 (RTKLQAQHVSYRELAACVQAAVAQGGWRS) are Mitochondrial matrix-facing. The chain crosses the membrane as a helical span at residues 215–235 (LWLGWGPTALRDVPFSALYWF). Over 236 to 255 (NYELVKSQLNGPRQKEQTSV) the chain is Mitochondrial intermembrane. A helical transmembrane segment spans residues 256–276 (GISFVAGGISGMVAATLTLPF). Residues 277–317 (DVVKTQRQMSLGAVEAMRVKPPRVDSTWLLLRRIQAESGTR) are Mitochondrial matrix-facing. Residues 318–338 (GLFAGFLPRIIKAAPSCAIMI) traverse the membrane as a helical segment. Topologically, residues 339-359 (STYEFGKSFFHRLNQEQPLGH) are mitochondrial intermembrane.

Belongs to the mitochondrial carrier (TC 2.A.29) family. Cleaved and degraded by AFG3L2; degradation by AFG3L2 is regulated by the ability of SLC25A39 to bind iron-sulfur. In absence of mitochondrial glutathione, SLC25A39 binds iron-sulfur, preventing cleavage and degradation by AFG3L2. The presence of mitochondrial glutathione prevents iron-sulfur-binding to SLC25A39, promoting cleavage and degradation by AFG3L2.

It is found in the mitochondrion inner membrane. It catalyses the reaction glutathione(in) = glutathione(out). The activity of SLC25A39 is regulated by levels of mitochondrial glutathione via its ability to bind [2Fe-2S] iron-sulfur cluster. Upon physiological levels of mitochondrial glutathione, glutathione prevents iron-sulfur-binding to SLC25A39 promoting cleavage and degradation by AFG3L2. Upon depletion of mitochondrial glutathione, SLC25A39 binds iron-sulfur, preventing cleavage and degradation by AFG3L2. Functionally, mitochondrial transporter required for glutathione import into mitochondria. Glutathione, which plays key roles in oxidative metabolism, is produced exclusively in the cytosol and is imported in many organelles. Mitochondrial glutathione is required for the activity and stability of proteins containing iron-sulfur clusters, as well as erythropoiesis. The polypeptide is Mitochondrial glutathione transporter SLC25A39 (Slc25a39) (Rattus norvegicus (Rat)).